Consider the following 156-residue polypeptide: Ribosomal RNA large subunit methyltransferase H (156 aa).

S-adenosyl-L-methionine is bound by residues leucine 73, glycine 104, and 123 to 128; that span reads LSSLTL.

This sequence belongs to the RNA methyltransferase RlmH family. As to quaternary structure, homodimer.

The protein localises to the cytoplasm. It catalyses the reaction pseudouridine(1915) in 23S rRNA + S-adenosyl-L-methionine = N(3)-methylpseudouridine(1915) in 23S rRNA + S-adenosyl-L-homocysteine + H(+). Its function is as follows. Specifically methylates the pseudouridine at position 1915 (m3Psi1915) in 23S rRNA. In Bordetella avium (strain 197N), this protein is Ribosomal RNA large subunit methyltransferase H.